Consider the following 489-residue polypeptide: Glycogen synthase (489 aa).

ADP-alpha-D-glucose is bound at residue Arg20.

It belongs to the glycosyltransferase 1 family. Bacterial/plant glycogen synthase subfamily.

It carries out the reaction [(1-&gt;4)-alpha-D-glucosyl](n) + ADP-alpha-D-glucose = [(1-&gt;4)-alpha-D-glucosyl](n+1) + ADP + H(+). The protein operates within glycan biosynthesis; glycogen biosynthesis. Synthesizes alpha-1,4-glucan chains using ADP-glucose. The protein is Glycogen synthase of Chlorobium phaeobacteroides (strain DSM 266 / SMG 266 / 2430).